The following is a 137-amino-acid chain: Small ribosomal subunit protein uS12 (137 aa).

Residues 1 to 57 form a disordered region; sequence MPTINQLVRKPRQSKSKKSDSPVLNRGFNSKKKQFTNLNSPQKRGVCTRVGTMTPRK. 3-methylthioaspartic acid is present on Asp-102. The interval 118-137 is disordered; the sequence is SGVDGRRQGRSLYGTKKPKN.

The protein belongs to the universal ribosomal protein uS12 family. In terms of assembly, part of the 30S ribosomal subunit. Contacts proteins S8 and S17. May interact with IF1 in the 30S initiation complex.

Functionally, with S4 and S5 plays an important role in translational accuracy. Interacts with and stabilizes bases of the 16S rRNA that are involved in tRNA selection in the A site and with the mRNA backbone. Located at the interface of the 30S and 50S subunits, it traverses the body of the 30S subunit contacting proteins on the other side and probably holding the rRNA structure together. The combined cluster of proteins S8, S12 and S17 appears to hold together the shoulder and platform of the 30S subunit. In Staphylococcus haemolyticus (strain JCSC1435), this protein is Small ribosomal subunit protein uS12.